A 359-amino-acid chain; its full sequence is MVAAQAKLVYHLNKYYNEKCQARKAAISKSIREVCKVVSDVLKEVEVQEPRFISSLNEMDNRYEGLEVISPTEFEVVLYLNQMGVFNFVDDGSLPGCAVLKLSDGRKRSMSLWVEFITASGYLSARKIRSRFQTLVAQAVDKCSYRDVVKMVADTSEVKLRIRERYVVQITPAFKCTGIWPRSAAHWPLPHIPWPGPNRVAEVKAEGFNLLSKECHTLAGKQSSAESDAWVLQFAEAENRLQLGGCRKKCLSLLKTLRDRHLELPGQPLNNYHMKTLVSYECEKHPRESDWDESCLGDRLNGILLQLISCLQCRRCPHYFLPNLDLFQGKPHSALENAAKQTWRLAREILTNPKSLEKL.

A ribonucleoside 5'-triphosphate-binding positions include 23 to 24 (RK) and 63 to 66 (YEGL). Glutamate 73 and glutamate 75 together coordinate Mg(2+). A ribonucleoside 5'-triphosphate-binding positions include lysine 248 and 252 to 255 (SLLK).

It belongs to the mab-21 family. Monomer. Homodecamer; composed of 2 back to back homopentamers. The protein may exist as monomer in solution and oiligomerizes upon ligand binding.

It is found in the nucleus. Its function is as follows. Putative nucleotidyltransferase required for several aspects of embryonic development including normal development of the eye. It is unclear whether it displays nucleotidyltransferase activity in vivo. Binds single-stranded RNA (ssRNA). The protein is Putative nucleotidyltransferase MAB21L1 (mab21l1) of Xenopus laevis (African clawed frog).